The sequence spans 715 residues: Poly(A) polymerase alpha-A (715 aa).

ATP contacts are provided by residues 82 to 84 (FGP), Thr91, 95 to 97 (DID), Asp149, Lys210, Tyr219, and 228 to 229 (GV). 3 residues coordinate Mg(2+): Asp95, Asp97, and Asp149. Positions 472-489 (RKQLHQLQPSHVSPKKKK) match the Nuclear localization signal 1 motif. 3 disordered regions span residues 510–543 (DSDN…PAAP), 560–590 (QNNS…TPKP), and 607–693 (KPVS…DLSD). Composition is skewed to polar residues over residues 515 to 539 (MSVP…QGNS) and 560 to 588 (QNNS…SSTP). A Nuclear localization signal 2 motif is present at residues 624-639 (KRTSSPSNEDSPKKNK). The span at 655–673 (DQNKLETEELKEVHSEEKS) shows a compositional bias: basic and acidic residues. The segment covering 674-692 (SSPVPGSLPFSQQSSTDLS) has biased composition (polar residues).

This sequence belongs to the poly(A) polymerase family. Monomer. It depends on Mg(2+) as a cofactor. Requires Mn(2+) as cofactor.

It localises to the nucleus. The enzyme catalyses RNA(n) + ATP = RNA(n)-3'-adenine ribonucleotide + diphosphate. Functionally, polymerase that creates the 3'-poly(A) tail of mRNA's. May acquire specificity through interaction with a cleavage and polyadenylation factor (CPSF). The sequence is that of Poly(A) polymerase alpha-A (papola-a) from Xenopus laevis (African clawed frog).